The sequence spans 358 residues: Peroxidase 12 (358 aa).

Residues Met-1 to Ala-31 form the signal peptide. 4 cysteine pairs are disulfide-bonded: Cys-53–Cys-134, Cys-86–Cys-91, Cys-140–Cys-335, and Cys-220–Cys-247. Residue His-84 is the Proton acceptor of the active site. Ca(2+)-binding residues include Asp-85, Val-88, Gly-90, Glu-92, and Ser-94. Position 183 (Pro-183) interacts with substrate. 2 N-linked (GlcNAc...) asparagine glycosylation sites follow: Asn-188 and Asn-202. Residue His-213 coordinates heme b. Thr-214 is a Ca(2+) binding site. The N-linked (GlcNAc...) asparagine glycan is linked to Asn-251. Asp-259, Ser-262, and Asp-267 together coordinate Ca(2+). A glycan (N-linked (GlcNAc...) asparagine) is linked at Asn-334.

The protein belongs to the peroxidase family. Classical plant (class III) peroxidase subfamily. It depends on heme b as a cofactor. Requires Ca(2+) as cofactor. As to expression, expressed in roots and leaves.

It localises to the secreted. The protein localises to the vacuole. The enzyme catalyses 2 a phenolic donor + H2O2 = 2 a phenolic radical donor + 2 H2O. Removal of H(2)O(2), oxidation of toxic reductants, biosynthesis and degradation of lignin, suberization, auxin catabolism, response to environmental stresses such as wounding, pathogen attack and oxidative stress. These functions might be dependent on each isozyme/isoform in each plant tissue. In terms of biological role, exhibits a Ca(2+)-pectate binding affinity which could be interpreted in vivo as a specificity to interact with the pectic structure of the cell wall. The protein is Peroxidase 12 (PER12) of Arabidopsis thaliana (Mouse-ear cress).